Here is a 167-residue protein sequence, read N- to C-terminus: Sulfopyruvate decarboxylase subunit alpha (167 aa).

It belongs to the ComD family. In terms of assembly, heterododecamer composed of 6 subunits alpha and 6 subunits beta.

It carries out the reaction 3-sulfopyruvate + H(+) = sulfoacetaldehyde + CO2. Its pathway is cofactor biosynthesis; coenzyme M biosynthesis; sulfoacetaldehyde from phosphoenolpyruvate and sulfite: step 4/4. In terms of biological role, involved in the biosynthesis of the coenzyme M (2-mercaptoethanesulfonic acid). Catalyzes the decarboxylation of sulfopyruvate to sulfoacetaldehyde. This Methanococcus maripaludis (strain DSM 14266 / JCM 13030 / NBRC 101832 / S2 / LL) protein is Sulfopyruvate decarboxylase subunit alpha (comD).